Consider the following 630-residue polypeptide: MALTSAASTDAPPTTGFWALTLGGVGVVFGDIGTSPLYAFREAVHVAAEGAQVTRVIVLGVLSLILWSLFIVVTAKYVLLLLRADNNGEGGTLSLMALGQRAIGRRSVFLMSLGVIGASMFIGDSMITPAISVLSAVEGLKIAAPALEHYVVPLTVGILVVLFAFQRWGTARVASAFGPVMIVWFSTLAVMGLIHINDDPSVLAAINPWHAVHFMLSHGMVGLVTIGAVFLAVTGGEALYADLGHFGRKPIQTGWLFFVLPSLLINYFGQGALVLSHPEAVENTFYRMVPESFLVPLIVLATAATVIASQAVITGAFSLISQAVQLGLLPRFEVRYTSETHAGQIYLPRVNMLLLIGVLMLVLLFRNSSGLASAYGIAVSTTMVADGVMGFVVIWKLWGWRPAAAAALIFPFVAVDAIFFSANLLKLLEGAWVPLLFGLLMATLIWVWRRGSAMLILKTRRTEVPLNDLIQSLEKRPPHIVKGTAVFLTSDPEYVPTALLHNLKHNKVLHEHNVILTIQTAQTPRVDPAERVTMENISDKFSKVRLRFGYMESPNVPKALVIARKLGWQFDIMSTSFFVSRRSLKPAAQSGLPRWQNHLFIALSRSANDATDYFQIPTGRVVEVGTQVTI.

12 helical membrane-spanning segments follow: residues 17-37 (FWAL…TSPL), 56-76 (VIVL…VTAK), 108-128 (VFLM…SMIT), 145-165 (PALE…LFAF), 176-196 (AFGP…LIHI), 214-234 (FMLS…LAVT), 255-275 (WLFF…ALVL), 293-313 (FLVP…QAVI), 345-365 (IYLP…VLLF), 375-395 (YGIA…VVIW), 402-422 (PAAA…FFSA), and 427-447 (LLEG…LIWV).

This sequence belongs to the HAK/KUP transporter (TC 2.A.72) family.

The protein localises to the cell inner membrane. The catalysed reaction is K(+)(in) + H(+)(in) = K(+)(out) + H(+)(out). Functionally, transport of potassium into the cell. Likely operates as a K(+):H(+) symporter. The protein is Probable potassium transport system protein Kup 2 of Rhodopseudomonas palustris (strain BisB18).